A 668-amino-acid polypeptide reads, in one-letter code: DNA ligase (668 aa).

NAD(+)-binding positions include 32 to 36 (DAEYD), 81 to 82 (SL), and Glu-113. Lys-115 serves as the catalytic N6-AMP-lysine intermediate. NAD(+) is bound by residues Arg-136, Glu-173, Lys-289, and Lys-313. Cys-407, Cys-410, Cys-425, and Cys-431 together coordinate Zn(2+). Residues 590–668 (ASEQPFAGKT…EEELQQALQG (79 aa)) form the BRCT domain.

It belongs to the NAD-dependent DNA ligase family. LigA subfamily. Mg(2+) is required as a cofactor. Requires Mn(2+) as cofactor.

The enzyme catalyses NAD(+) + (deoxyribonucleotide)n-3'-hydroxyl + 5'-phospho-(deoxyribonucleotide)m = (deoxyribonucleotide)n+m + AMP + beta-nicotinamide D-nucleotide.. DNA ligase that catalyzes the formation of phosphodiester linkages between 5'-phosphoryl and 3'-hydroxyl groups in double-stranded DNA using NAD as a coenzyme and as the energy source for the reaction. It is essential for DNA replication and repair of damaged DNA. The polypeptide is DNA ligase (Aeromonas hydrophila subsp. hydrophila (strain ATCC 7966 / DSM 30187 / BCRC 13018 / CCUG 14551 / JCM 1027 / KCTC 2358 / NCIMB 9240 / NCTC 8049)).